The following is a 370-amino-acid chain: Putative agmatine deiminase (370 aa).

The active-site Amidino-cysteine intermediate is Cys-361.

The protein belongs to the agmatine deiminase family.

It catalyses the reaction agmatine + H2O = N-carbamoylputrescine + NH4(+). The protein is Putative agmatine deiminase of Shewanella putrefaciens (strain CN-32 / ATCC BAA-453).